Reading from the N-terminus, the 437-residue chain is Trigger factor (437 aa).

The PPIase FKBP-type domain occupies 161 to 246; that stretch reads DDQVNIDFVG…VNSVSAPVLP (86 aa).

Belongs to the FKBP-type PPIase family. Tig subfamily.

Its subcellular location is the cytoplasm. It catalyses the reaction [protein]-peptidylproline (omega=180) = [protein]-peptidylproline (omega=0). Functionally, involved in protein export. Acts as a chaperone by maintaining the newly synthesized protein in an open conformation. Functions as a peptidyl-prolyl cis-trans isomerase. In Pseudomonas putida (strain ATCC 700007 / DSM 6899 / JCM 31910 / BCRC 17059 / LMG 24140 / F1), this protein is Trigger factor.